The sequence spans 955 residues: 4-alpha-glucanotransferase DPE2 (955 aa).

N-acetylmethionine is present on Met1. CBM20 domains are found at residues 13-122 (KSSK…LWQS) and 157-270 (SDQD…PWRG). Residues 925–955 (SGRSVPANVSGEDINKSRGEVIANGSTKPNP) form a disordered region.

The protein belongs to the disproportionating enzyme family.

It is found in the cytoplasm. The protein localises to the cytosol. The enzyme catalyses Transfers a segment of a (1-&gt;4)-alpha-D-glucan to a new position in an acceptor, which may be glucose or a (1-&gt;4)-alpha-D-glucan.. Inactivated in response to cold stress. Cytosolic alpha-glucanotransferase essential for the cytosolic metabolism of maltose, an intermediate on the pathway by which starch is converted to sucrose in leaves at night. Metabolizes maltose exported from the chloroplast and is specific for beta-maltose. May play a role in freezing tolerance. Temperature drop induces inactivation of DPE2 that leads to rapid accumulation of maltose, a solute that protects cells from freezing damage. This Arabidopsis thaliana (Mouse-ear cress) protein is 4-alpha-glucanotransferase DPE2 (DPE2).